Consider the following 217-residue polypeptide: TLD domain-containing protein 2 (217 aa).

A disordered region spans residues 1-48; sequence MKSLRWRYTRLPSQVEDALSGEEDKEEEEEKEEETTPAPTPVPEHPMV. Residues 19–35 show a composition bias toward acidic residues; it reads LSGEEDKEEEEEKEEET. A TLDc domain is found at 56-217; that stretch reads QVLGASEMSQ…ISELEAWVLS (162 aa).

The protein belongs to the OXR1 family.

In Bos taurus (Bovine), this protein is TLD domain-containing protein 2 (TLDC2).